We begin with the raw amino-acid sequence, 1373 residues long: DNA-directed RNA polymerase subunit beta (1373 aa).

This sequence belongs to the RNA polymerase beta chain family. As to quaternary structure, the RNAP catalytic core consists of 2 alpha, 1 beta, 1 beta' and 1 omega subunit. When a sigma factor is associated with the core the holoenzyme is formed, which can initiate transcription.

It carries out the reaction RNA(n) + a ribonucleoside 5'-triphosphate = RNA(n+1) + diphosphate. Functionally, DNA-dependent RNA polymerase catalyzes the transcription of DNA into RNA using the four ribonucleoside triphosphates as substrates. The chain is DNA-directed RNA polymerase subunit beta from Rickettsia rickettsii (strain Iowa).